Here is a 286-residue protein sequence, read N- to C-terminus: Expansin-like protein 1 (286 aa).

The N-terminal stretch at 1–21 (MKTFVLFVILLCLTFLSISKS) is a signal peptide. Over 22–265 (ETCPFSQSLV…TGASIGTPSD (244 aa)) the chain is Extracellular. The Expansin-like EG45 domain occupies 44 to 145 (AGNCGYENLM…YKVPCGVNGN (102 aa)). Intrachain disulfides connect C47–C77 and C80–C140. N-linked (GlcNAc...) asparagine glycosylation is found at N82 and N89. The chain crosses the membrane as a helical span at residues 266-286 (ASSLTLYALFSLTILFLVMLN).

This sequence belongs to the expansin family. Expansin A subfamily.

The protein resides in the membrane. May serve to lubricate the movement of the cellulose microfibrils during cell growth and wall extension and/or they may serve to maintain the fluid state of the slug cell wall. The polypeptide is Expansin-like protein 1 (expl1) (Dictyostelium discoideum (Social amoeba)).